The sequence spans 153 residues: 3-dehydroquinate dehydratase (153 aa).

Tyrosine 26 serves as the catalytic Proton acceptor. Residues asparagine 77, histidine 83, and aspartate 90 each coordinate substrate. The Proton donor role is filled by histidine 103. Substrate-binding positions include leucine 104 to serine 105 and arginine 114.

This sequence belongs to the type-II 3-dehydroquinase family. As to quaternary structure, homododecamer.

It carries out the reaction 3-dehydroquinate = 3-dehydroshikimate + H2O. Its pathway is metabolic intermediate biosynthesis; chorismate biosynthesis; chorismate from D-erythrose 4-phosphate and phosphoenolpyruvate: step 3/7. Functionally, catalyzes a trans-dehydration via an enolate intermediate. The protein is 3-dehydroquinate dehydratase of Colwellia psychrerythraea (strain 34H / ATCC BAA-681) (Vibrio psychroerythus).